The primary structure comprises 87 residues: Omega-lycotoxin-Am1b (87 aa).

The signal sequence occupies residues 1–17 (MKLSIFFVLFFIAIAYC). A propeptide spanning residues 18–40 (QPEFLDDEEDEVEETLPVAEEGR) is cleaved from the precursor. Cystine bridges form between cysteine 44/cysteine 59, cysteine 51/cysteine 64, cysteine 58/cysteine 84, and cysteine 66/cysteine 82.

Belongs to the neurotoxin omega-lctx family. In terms of tissue distribution, expressed by the venom gland.

It localises to the secreted. Functionally, modulates Cav2.1/CACNA1A voltage-gated calcium channels (P/Q-type currents) in rat cerebellar Purkinje cells and hippocampal CA1-CA3 neurons. At saturating concentrations (&gt;10 nM) decelerates activation kinetics and slightly increases peak amplitude without affecting deactivation kinetics. In vivo, does not cause death when intravenously injected into mice. In rat models, through its activity on Cav2.1/CACNA1A, has an ameliorative effect on memory defects provoked by hyperstimulation of N-methyl-D-aspartate receptors (NMDARs) in the hippocampus. This Alopecosa marikovskyi (Wolf spider) protein is Omega-lycotoxin-Am1b.